The following is a 169-amino-acid chain: Lipoprotein signal peptidase (169 aa).

Helical transmembrane passes span 56–76 (FLPP…VIIY) and 84–104 (QPLF…NLID). Catalysis depends on residues Asp113 and Asp139. The chain crosses the membrane as a helical span at residues 132 to 152 (WPIFNIADSAITIGACMLIIF).

Belongs to the peptidase A8 family.

It localises to the cell inner membrane. The catalysed reaction is Release of signal peptides from bacterial membrane prolipoproteins. Hydrolyzes -Xaa-Yaa-Zaa-|-(S,diacylglyceryl)Cys-, in which Xaa is hydrophobic (preferably Leu), and Yaa (Ala or Ser) and Zaa (Gly or Ala) have small, neutral side chains.. It functions in the pathway protein modification; lipoprotein biosynthesis (signal peptide cleavage). Functionally, this protein specifically catalyzes the removal of signal peptides from prolipoproteins. The chain is Lipoprotein signal peptidase from Chlorobium phaeovibrioides (strain DSM 265 / 1930) (Prosthecochloris vibrioformis (strain DSM 265)).